We begin with the raw amino-acid sequence, 1032 residues long: ATPase MORC2 (1032 aa).

Ala2 is modified (N-acetylalanine). ATP-binding positions include Asn39, 87 to 89, and 99 to 105; these read SAK and QYGNGLK. Asn39 contributes to the Mg(2+) binding site. A coiled-coil region spans residues 282-362; it reads SRFKTRAEQE…KEAKQRALKE (81 aa). Position 427 (Lys427) interacts with ATP. The CW-type zinc-finger motif lies at 490–544; the sequence is AMEIPTTIQCDLCLKWRTLPFQLSSVEKDYPDTWVCSMNPDPEQDRCEASEQKQK. 4 residues coordinate Zn(2+): Cys499, Cys502, Cys525, and Cys536. Disordered stretches follow at residues 530-563 and 577-793; these read DPEQ…KQKQ and ALQK…RAQK. Basic and acidic residues-rich tracts occupy residues 532-543 and 550-563; these read EQDRCEASEQKQ and FRKD…KQKQ. The stretch at 547–584 forms a coiled coil; sequence LGTFRKDMKTQEEKQKQLTEKIRQQQEKLEALQKTTPI. A Phosphothreonine modification is found at Thr582. A phosphoserine mark is found at Ser602 and Ser615. Pro residues predominate over residues 627–638; sequence SRPPSLPTPRPA. Lys652 is covalently cross-linked (Glycyl lysine isopeptide (Lys-Gly) (interchain with G-Cter in SUMO2)). Over residues 690-704 the composition is skewed to low complexity; it reads PLVQQLSPSLLPNSK. Ser696 bears the Phosphoserine mark. Residue Lys704 forms a Glycyl lysine isopeptide (Lys-Gly) (interchain with G-Cter in SUMO2) linkage. Ser705 carries the phosphoserine modification. Residues 711 to 720 are compositionally biased toward low complexity; sequence SPKVIKTPVV. Lys716 is covalently cross-linked (Glycyl lysine isopeptide (Lys-Gly) (interchain with G-Cter in SUMO2)). Ser725 and Ser730 each carry phosphoserine. Thr733 carries the phosphothreonine modification. Phosphoserine; by PAK1 is present on Ser739. The stretch at 741–761 forms a coiled coil; the sequence is AVSDEEEVEEEAERRKERCKR. Ser743 carries the phosphoserine modification. Over residues 765-774 the composition is skewed to basic and acidic residues; the sequence is VVKEEKKDSN. Lys767 participates in a covalent cross-link: Glycyl lysine isopeptide (Lys-Gly) (interchain with G-Cter in SUMO2). 2 positions are modified to phosphoserine: Ser777 and Ser779. Residue Lys819 forms a Glycyl lysine isopeptide (Lys-Gly) (interchain with G-Cter in SUMO2) linkage. The interval 850–870 is disordered; that stretch reads RLMKPPSPEHQSLDTQQEGGE. Lys932 participates in a covalent cross-link: Glycyl lysine isopeptide (Lys-Gly) (interchain with G-Cter in SUMO2). The stretch at 966–1016 forms a coiled coil; sequence QSRADSRAKASEESLRTSERKLRETEEKLQKLRTNIVALLQKVQEDIDINT.

Homodimerizes upon ATP-binding and dissociate upon ATP hydrolysis; homodimerization is required for gene silencing. Interacts with HDAC4. Interacts with ACLY. Interacts with TASOR and MPHOSPH8; the interactions associate MORC2 with the HUSH complex which recruits MORC2 to heterochromatic loci. Phosphorylated by PAK1 at Ser-739 upon DNA damage. Phosphorylation is required for ATPase activity and recruitment to damaged chromatin. As to expression, highly expressed in smooth muscle, pancreas and testis.

Its subcellular location is the nucleus. It localises to the cytoplasm. The protein localises to the cytosol. It is found in the chromosome. The protein resides in the nucleus matrix. It carries out the reaction ATP + H2O = ADP + phosphate + H(+). ATPase activity is dependent of phosphorylation by PAK1 and presence of DNA. Its function is as follows. Essential for epigenetic silencing by the HUSH (human silencing hub) complex. Recruited by HUSH to target site in heterochromatin, the ATPase activity and homodimerization are critical for HUSH-mediated silencing. Represses germ cell-related genes and L1 retrotransposons in collaboration with SETDB1 and the HUSH complex, the silencing is dependent of repressive epigenetic modifications, such as H3K9me3 mark. Silencing events often occur within introns of transcriptionally active genes, and lead to the down-regulation of host gene expression. During DNA damage response, regulates chromatin remodeling through ATP hydrolysis. Upon DNA damage, is phosphorylated by PAK1, both colocalize to chromatin and induce H2AX expression. ATPase activity is required and dependent of phosphorylation by PAK1 and presence of DNA. Recruits histone deacetylases, such as HDAC4, to promoter regions, causing local histone H3 deacetylation and transcriptional repression of genes such as CA9. Exhibits a cytosolic function in lipogenesis, adipogenic differentiation, and lipid homeostasis by increasing the activity of ACLY, possibly preventing its dephosphorylation. This chain is ATPase MORC2, found in Homo sapiens (Human).